An 867-amino-acid polypeptide reads, in one-letter code: Putative ubiquitin thioesterase L96 (867 aa).

Disordered stretches follow at residues 49-73, 177-204, 231-271, and 379-591; these read VNQY…GKQD, IKSV…MKKK, YILS…PKYR, and LSTQ…YKGG. Basic residues-rich tracts occupy residues 234–258 and 421–430; these read SRKK…RSPG and KITRKPKSPR. Low complexity-rich tracts occupy residues 433–462 and 472–551; these read PPAS…SVRA and PPSS…KSPS. Positions 565–575 are enriched in polar residues; it reads ITVDPSVTPPS. A compositionally biased stretch (basic and acidic residues) spans 582–591; that stretch reads RPELPEYKGG. The 140-residue stretch at 606–745 folds into the OTU domain; sequence YKVIPVKGDG…DYHYTALTPL (140 aa). Aspartate 614 is a catalytic residue. Cysteine 617 (nucleophile) is an active-site residue. Histidine 738 is a catalytic residue.

It catalyses the reaction Thiol-dependent hydrolysis of ester, thioester, amide, peptide and isopeptide bonds formed by the C-terminal Gly of ubiquitin (a 76-residue protein attached to proteins as an intracellular targeting signal).. Hydrolase that can remove conjugated ubiquitin from proteins and may therefore play an important regulatory role at the level of protein turnover by preventing degradation. May be involved in TIV genomic DNA packaging in a manner related to the Gag polyproteins of the mammalian viruses. The protein is Putative ubiquitin thioesterase L96 of Tipula iridescent virus (TIV).